Here is a 516-residue protein sequence, read N- to C-terminus: 2,3-bisphosphoglycerate-independent phosphoglycerate mutase (516 aa).

Mn(2+)-binding residues include Asp13 and Ser63. The active-site Phosphoserine intermediate is Ser63. Residues His124, 154–155 (RD), Arg186, Arg192, 262–265 (RPDR), and Lys337 each bind substrate. Residues Asp404, His408, Asp445, His446, and His464 each contribute to the Mn(2+) site.

It belongs to the BPG-independent phosphoglycerate mutase family. Monomer. The cofactor is Mn(2+).

The enzyme catalyses (2R)-2-phosphoglycerate = (2R)-3-phosphoglycerate. Its pathway is carbohydrate degradation; glycolysis; pyruvate from D-glyceraldehyde 3-phosphate: step 3/5. Functionally, catalyzes the interconversion of 2-phosphoglycerate and 3-phosphoglycerate. The sequence is that of 2,3-bisphosphoglycerate-independent phosphoglycerate mutase from Cellvibrio japonicus (strain Ueda107) (Pseudomonas fluorescens subsp. cellulosa).